The following is a 365-amino-acid chain: Peptide chain release factor 2 (365 aa).

Position 251 is an N5-methylglutamine (Gln251).

Belongs to the prokaryotic/mitochondrial release factor family. Post-translationally, methylated by PrmC. Methylation increases the termination efficiency of RF2.

The protein resides in the cytoplasm. In terms of biological role, peptide chain release factor 2 directs the termination of translation in response to the peptide chain termination codons UGA and UAA. In Campylobacter jejuni subsp. jejuni serotype O:23/36 (strain 81-176), this protein is Peptide chain release factor 2.